We begin with the raw amino-acid sequence, 668 residues long: MAP kinase kinase PBS2 (668 aa).

Over residues 1–15 (MEDKFANLSLHEKTG) the composition is skewed to basic and acidic residues. 3 disordered regions span residues 1–43 (MEDK…SSHY), 61–120 (RALK…ASSK), and 181–313 (NPNR…GSSG). Polar residues-rich tracts occupy residues 16–43 (KSSI…SSHY), 68–91 (SVGS…QQIV), and 104–120 (SKVS…ASSK). The residue at position 68 (serine 68) is a Phosphoserine. The segment covering 239–250 (AQQPQQFAPSPS) has biased composition (low complexity). Serine 269 bears the Phosphoserine mark. Positions 270–300 (NPGSLINGVQSTSTSSSTEGPHDTVGTTPRT) are enriched in polar residues. Low complexity predominate over residues 301–310 (GNSNNSSNSG). Residues 360–623 (LEFLDELGHG…YAALTEHPWL (264 aa)) form the Protein kinase domain. Residues 366 to 374 (LGHGNYGNV) and lysine 389 contribute to the ATP site. Residue aspartate 485 is the Proton acceptor of the active site. Serine 514 bears the Phosphoserine mark. Phosphothreonine is present on threonine 518.

Belongs to the protein kinase superfamily. STE Ser/Thr protein kinase family. MAP kinase kinase subfamily. Interacts with NBP2, PTC1, SHO1 and STE11. Post-translationally, activated by phosphorylation by SSK2 or SSK22. Ser/Thr phosphorylation is also necessary for SHO1-mediated activation.

The protein localises to the cytoplasm. It carries out the reaction L-seryl-[protein] + ATP = O-phospho-L-seryl-[protein] + ADP + H(+). It catalyses the reaction L-threonyl-[protein] + ATP = O-phospho-L-threonyl-[protein] + ADP + H(+). The enzyme catalyses L-tyrosyl-[protein] + ATP = O-phospho-L-tyrosyl-[protein] + ADP + H(+). Its function is as follows. Kinase involved in a signal transduction pathway that is activated by changes in the osmolarity of the extracellular environment. Activates the MAP kinase HOG1 by concomitant phosphorylation at 'Thr-174' and 'Tyr-176'. The polypeptide is MAP kinase kinase PBS2 (PBS2) (Saccharomyces cerevisiae (strain ATCC 204508 / S288c) (Baker's yeast)).